Consider the following 452-residue polypeptide: Adenylyltransferase and sulfurtransferase MOCS3 (452 aa).

Residues glycine 99, aspartate 120, 127–131, lysine 144, and 188–189 contribute to the ATP site; these read SNLHR and DN. 2 residues coordinate Zn(2+): cysteine 230 and cysteine 233. The active-site Glycyl thioester intermediate; for adenylyltransferase activity is cysteine 247. Residues cysteine 305 and cysteine 308 each coordinate Zn(2+). The Rhodanese domain maps to 354-450; the sequence is KTKAHLLLDV…WTNQVDQSFP (97 aa). The Cysteine persulfide intermediate; for sulfurtransferase activity role is filled by cysteine 409.

The protein in the N-terminal section; belongs to the HesA/MoeB/ThiF family. UBA4 subfamily. It depends on Zn(2+) as a cofactor.

The protein resides in the cytoplasm. Its subcellular location is the cytosol. The enzyme catalyses [molybdopterin-synthase sulfur-carrier protein]-C-terminal Gly-Gly + ATP + H(+) = [molybdopterin-synthase sulfur-carrier protein]-C-terminal Gly-Gly-AMP + diphosphate. The catalysed reaction is [molybdopterin-synthase sulfur-carrier protein]-C-terminal Gly-Gly-AMP + S-sulfanyl-L-cysteinyl-[cysteine desulfurase] + AH2 = [molybdopterin-synthase sulfur-carrier protein]-C-terminal-Gly-aminoethanethioate + L-cysteinyl-[cysteine desulfurase] + A + AMP + 2 H(+). It functions in the pathway tRNA modification; 5-methoxycarbonylmethyl-2-thiouridine-tRNA biosynthesis. It participates in cofactor biosynthesis; molybdopterin biosynthesis. Functionally, plays a central role in 2-thiolation of mcm(5)S(2)U at tRNA wobble positions of cytosolic tRNA(Lys), tRNA(Glu) and tRNA(Gln). Also essential during biosynthesis of the molybdenum cofactor. Acts by mediating the C-terminal thiocarboxylation of sulfur carriers URM1 and MOCS2A. Its N-terminus first activates URM1 and MOCS2A as acyl-adenylates (-COAMP), then the persulfide sulfur on the catalytic cysteine is transferred to URM1 and MOCS2A to form thiocarboxylation (-COSH) of their C-terminus. The reaction probably involves hydrogen sulfide that is generated from the persulfide intermediate and that acts as a nucleophile towards URM1 and MOCS2A. Subsequently, a transient disulfide bond is formed. Does not use thiosulfate as sulfur donor; NFS1 probably acting as a sulfur donor for thiocarboxylation reactions. The sequence is that of Adenylyltransferase and sulfurtransferase MOCS3 from Drosophila virilis (Fruit fly).